The following is a 183-amino-acid chain: MKVIGIVGMPASGKGEASRIARDLGIPVVVMGDAIRERVKEAGLPPTDANFGAIAGKLRADLGMDAIARITIPRIEATGAPVALVDGIRGDYEVATFRDHFPDFTLIGIDSSFTTRYRRLKNRGRSDDSLTPEELRARDERELGWGLGRALEQADCRVTNEASLEEFAAEIRALLCRLGGREE.

8-15 is a binding site for ATP; sequence GMPASGKG.

The protein belongs to the UPF0200 family.

In Methanoculleus marisnigri (strain ATCC 35101 / DSM 1498 / JR1), this protein is UPF0200 protein Memar_1556.